The primary structure comprises 287 residues: Small ribosomal subunit protein uS3 (287 aa).

A KH type-2 domain is found at 38–106 (IRRLLATGLE…QVQLNILEVK (69 aa)). The segment at 216–287 (AAAPAGADRP…AETTTQNPGS (72 aa)) is disordered. Residues 238-287 (SGASGTTATSTDAGRAASGTQEAPAAAEAAAGTEAAAGAAAETTTQNPGS) show a composition bias toward low complexity.

This sequence belongs to the universal ribosomal protein uS3 family. In terms of assembly, part of the 30S ribosomal subunit. Forms a tight complex with proteins S10 and S14.

Functionally, binds the lower part of the 30S subunit head. Binds mRNA in the 70S ribosome, positioning it for translation. The polypeptide is Small ribosomal subunit protein uS3 (Mycobacterium sp. (strain JLS)).